Reading from the N-terminus, the 733-residue chain is DNA-binding protein SATB2 (733 aa).

Residues Met1–Pro47 form a disordered region. Ser20 is subject to Phosphoserine. Residues Lys24 and Lys30 each participate in a glycyl lysine isopeptide (Lys-Gly) (interchain with G-Cter in SUMO2) cross-link. Ser39 carries the phosphoserine modification. The CMP domain maps to Gly57 to Ser158. A Glycyl lysine isopeptide (Lys-Gly) (interchain with G-Cter in SUMO2) cross-link involves residue Lys161. Residues Lys161–Val234 enclose the CUTL domain. Lys233 participates in a covalent cross-link: Glycyl lysine isopeptide (Lys-Gly) (interchain with G-Cter in SUMO). Lys350 participates in a covalent cross-link: Glycyl lysine isopeptide (Lys-Gly) (interchain with G-Cter in SUMO); alternate. Residue Lys350 forms a Glycyl lysine isopeptide (Lys-Gly) (interchain with G-Cter in SUMO2); alternate linkage. A DNA-binding region (CUT 1) is located at residues Lys350–Arg437. The tract at residues Asp435–Pro473 is disordered. Residues Met441–Ser458 are compositionally biased toward low complexity. Position 454 is a phosphoserine (Ser454). Residues Arg459–Thr470 show a composition bias toward polar residues. A Phosphothreonine modification is found at Thr467. Positions Pro473 to Ser560 form a DNA-binding region, CUT 2. A Glycyl lysine isopeptide (Lys-Gly) (interchain with G-Cter in SUMO2) cross-link involves residue Lys475. Disordered stretches follow at residues Gln580 to Ser617 and Asp691 to Arg733. The residue at position 594 (Ser594) is a Phosphoserine. Residues Pro615 to Gly674 constitute a DNA-binding region (homeobox). The segment covering Leu694–Glu708 has biased composition (acidic residues). Over residues Glu709 to Arg733 the composition is skewed to basic and acidic residues. A Glycyl lysine isopeptide (Lys-Gly) (interchain with G-Cter in SUMO2) cross-link involves residue Lys724.

Belongs to the CUT homeobox family. Interacts with PIAS1. Interacts with ATF4 and RUNX2; resulting in enhanced DNA binding and transactivation by these transcription factors. Post-translationally, sumoylated by PIAS1. Sumoylation promotes nuclear localization, but represses transcription factor activity. In terms of tissue distribution, expressed in cortical neurons that extend axons across the corpus callosum. Also expressed in branchial arches and in cells of the osteoblast lineage, but not in chondrocytes and osteoclasts.

Its subcellular location is the nucleus matrix. Its function is as follows. Binds to DNA, at nuclear matrix- or scaffold-associated regions. Thought to recognize the sugar-phosphate structure of double-stranded DNA. Transcription factor controlling nuclear gene expression, by binding to matrix attachment regions (MARs) of DNA and inducing a local chromatin-loop remodeling. Acts as a docking site for several chromatin remodeling enzymes and also by recruiting corepressors (HDACs) or coactivators (HATs) directly to promoters and enhancers. Required for the initiation of the upper-layer neurons (UL1) specific genetic program and for the inactivation of deep-layer neurons (DL) and UL2 specific genes, probably by modulating Bcl11b expression. Repressor of Ctip2 and regulatory determinant of corticocortical connections in the developing cerebral cortex. May play an important role in palate formation. Acts as a molecular node in a transcriptional network regulating skeletal development and osteoblast differentiation. This is DNA-binding protein SATB2 (Satb2) from Mus musculus (Mouse).